A 210-amino-acid chain; its full sequence is ESCRT-III complex subunit did4 (210 aa).

The segment at 1 to 38 is disordered; the sequence is MGLTSWLFGGGKSPQEQLRAHQRSLGRAERELDRERTK. Residues 15–97 are a coiled coil; that stretch reads QEQLRAHQRS…AISLRLQTMR (83 aa). The span at 26–38 shows a compositional bias: basic and acidic residues; that stretch reads GRAERELDRERTK.

It belongs to the SNF7 family. In terms of assembly, core component of the ESCRT-III complex (endosomal sorting required for transport complex III). ESCRT-III appears to be sequentially assembled as a flat lattice on the endosome membrane.

The protein resides in the cytoplasm. It is found in the endosome membrane. Functionally, required for the sorting and concentration of proteins resulting in the entry of these proteins into the invaginating vesicles of the multivesicular body (MVB). Acts a component of the ESCRT-III complex, which appears to be critical for late steps in MVB sorting, such as membrane invagination and final cargo sorting and recruitment of late-acting components of the sorting machinery. The MVB pathway requires the sequential function of ESCRT-O, -I,-II and -III complex assemblies. The protein is ESCRT-III complex subunit did4 (did4) of Schizosaccharomyces pombe (strain 972 / ATCC 24843) (Fission yeast).